Consider the following 617-residue polypeptide: Manganese lipoxygenase (617 aa).

The N-terminal stretch at 1-17 (MRIGLLAFAVAARYVEA) is a signal peptide. Residues 23 to 48 (GEEVASSSAPTTLPSTSSSSALPSPT) are compositionally biased toward low complexity. Positions 23–59 (GEEVASSSAPTTLPSTSSSSALPSPTKYTLPHEDPNP) are disordered. 3 N-linked (GlcNAc...) asparagine glycosylation sites follow: Asn-109, Asn-119, and Asn-160. A Lipoxygenase domain is found at 122–617 (LRDIQSHGGL…PAVNPFFLSI (496 aa)). His-293, His-297, His-479, and Asn-483 together coordinate Mn(2+). N-linked (GlcNAc...) asparagine glycosylation is present at Asn-547. Residue Ile-617 participates in Mn(2+) binding.

It belongs to the lipoxygenase family. Manganese lipoxygenase subfamily. Requires Mn(2+) as cofactor.

Its subcellular location is the secreted. It carries out the reaction (9Z,12Z)-octadecadienoate + O2 = (9S)-hydroperoxy-(10E,12Z)-octadecadienoate. The enzyme catalyses (9Z,12Z)-octadecadienoate + O2 = (11S)-hydroperoxy-(9Z,12Z)-octadecadienoate. The catalysed reaction is (9Z,12Z)-octadecadienoate + O2 = (13R)-hydroperoxy-(9Z,11E)-octadecadienoate. It catalyses the reaction (9Z,12Z,15Z)-octadecatrienoate + O2 = (9S)-hydroperoxy-(10E,12Z,15Z)-octadecatrienoate. It carries out the reaction (9Z,12Z,15Z)-octadecatrienoate + O2 = (11R)-hydroperoxy-(9Z,12Z,15Z)-octadecatrienoate. The enzyme catalyses (9Z,12Z,15Z)-octadecatrienoate + O2 = (13R)-hydroperoxy-(9Z,11E,15Z)-octadecatrienoate. Lipoxygenase that metabolizes linoleic and alpha-linolenic acids to 9S-, 11- and 13R-hydroperoxy fatty acids. At the end of lipoxygenation, the intermediate products 11S-HPODE and 13R-HPODE from linoleic acid are then transformed into 9S-HPODE as the final product. The intermediate product 11R-HPOTrE from alpha-linolenic acid is transformed into 9S-HPOTrE and 13R-HPOTrE as the final products. 9S-HPOTrE is further oxidized by the enzyme to 9,16-DiHOTrE as the end product. Also acts on gamma-linolenic acid producing 9-HOTrE(n-6) as the main metabolite. The protein is Manganese lipoxygenase of Nakataea oryzae (Rice stem rot fungus).